Here is a 419-residue protein sequence, read N- to C-terminus: Phosphatidylinositol 5-phosphate 4-kinase type-2 gamma (419 aa).

A PIPK domain is found at 46–418 (ASDPLISVFM…RFLEFVTNIF (373 aa)). Residues 299–310 (QEEEEDLEEDHT) are compositionally biased toward acidic residues. Residues 299–320 (QEEEEDLEEDHTENESSPHMNV) form a disordered region.

Phosphorylated, phosphorylation is induced by EGF.

The protein resides in the endoplasmic reticulum. It is found in the cytoplasm. The catalysed reaction is a 1,2-diacyl-sn-glycero-3-phospho-(1D-myo-inositol-5-phosphate) + ATP = a 1,2-diacyl-sn-glycero-3-phospho-(1D-myo-inositol-4,5-bisphosphate) + ADP + H(+). The enzyme catalyses 1,2-dihexadecanoyl-sn-glycero-3-phospho-(1D-myo-inositol-5-phosphate) + ATP = 1,2-dihexadecanoyl-sn-glycero-3-phospho-(1D-myo-inositol-4,5-bisphosphate) + ADP + H(+). It carries out the reaction 1,2-dihexadecanoyl-sn-glycero-3-phospho-(1D-myo-inositol-5-phosphate) + GTP = 1,2-dihexadecanoyl-sn-glycero-3-phospho-(1D-myo-inositol-4,5-bisphosphate) + GDP + H(+). Functionally, phosphatidylinositol 5-phosphate 4-kinase with low enzymatic activity. May be a GTP sensor, has higher GTP-dependent kinase activity than ATP-dependent kinase activity. This is Phosphatidylinositol 5-phosphate 4-kinase type-2 gamma (pip4k2c) from Xenopus tropicalis (Western clawed frog).